Consider the following 148-residue polypeptide: Large ribosomal subunit protein uL13 (148 aa).

The protein belongs to the universal ribosomal protein uL13 family. In terms of assembly, part of the 50S ribosomal subunit.

Its function is as follows. This protein is one of the early assembly proteins of the 50S ribosomal subunit, although it is not seen to bind rRNA by itself. It is important during the early stages of 50S assembly. This chain is Large ribosomal subunit protein uL13, found in Sulfolobus acidocaldarius (strain ATCC 33909 / DSM 639 / JCM 8929 / NBRC 15157 / NCIMB 11770).